The chain runs to 117 residues: Small ribosomal subunit protein uS19c (117 aa).

Belongs to the universal ribosomal protein uS19 family.

It is found in the plastid. Functionally, protein S19 forms a complex with S13 that binds strongly to the 16S ribosomal RNA. This Helicosporidium sp. subsp. Simulium jonesii (Green alga) protein is Small ribosomal subunit protein uS19c (rps19).